A 275-amino-acid chain; its full sequence is Diaminopimelate epimerase (275 aa).

Residues N20 and N63 each coordinate substrate. C72 functions as the Proton donor in the catalytic mechanism. Substrate-binding positions include 73–74 (GN), N179, and 197–198 (ER). C207 (proton acceptor) is an active-site residue. 208 to 209 (GT) contacts substrate.

The protein belongs to the diaminopimelate epimerase family. In terms of assembly, homodimer.

It is found in the cytoplasm. It carries out the reaction (2S,6S)-2,6-diaminopimelate = meso-2,6-diaminopimelate. It participates in amino-acid biosynthesis; L-lysine biosynthesis via DAP pathway; DL-2,6-diaminopimelate from LL-2,6-diaminopimelate: step 1/1. Catalyzes the stereoinversion of LL-2,6-diaminopimelate (L,L-DAP) to meso-diaminopimelate (meso-DAP), a precursor of L-lysine and an essential component of the bacterial peptidoglycan. The protein is Diaminopimelate epimerase of Chlamydia trachomatis serovar L2 (strain ATCC VR-902B / DSM 19102 / 434/Bu).